The following is a 438-amino-acid chain: Coenzyme A disulfide reductase (438 aa).

Residue 8 to 33 participates in FAD binding; that stretch reads GAVAGGATCASQIRRLDKESDIIIFE. Residues threonine 15, glutamine 19, arginine 22, serine 39, and asparagine 42 each coordinate substrate. The Nucleophile role is filled by cysteine 43. The active-site Redox-active is cysteine 43. Lysine 71 provides a ligand contact to substrate. An NADP(+)-binding site is contributed by 151–166; the sequence is VLVVGAGYVSLEVLEN. Residue 267-277 coordinates FAD; the sequence is TNVPNIYAIGD. Histidine 299 provides a ligand contact to substrate. An FAD-binding site is contributed by tyrosine 419. Residue lysine 427 participates in substrate binding.

It belongs to the class-III pyridine nucleotide-disulfide oxidoreductase family. Homodimer. The cofactor is FAD.

The catalysed reaction is NADP(+) + 2 CoA = CoA-disulfide + NADPH + H(+). In terms of biological role, catalyzes specifically the NADPH-dependent reduction of coenzyme A disulfide. The sequence is that of Coenzyme A disulfide reductase from Staphylococcus aureus (strain MSSA476).